Consider the following 812-residue polypeptide: DNA replication licensing factor MCM3 (812 aa).

The residue at position 2 (alanine 2) is an N-acetylalanine. The residue at position 160 (serine 160) is a Phosphoserine. At lysine 293 the chain carries N6-acetyllysine. One can recognise an MCM domain in the interval 295 to 502 (VFEQLARSLA…QDREISDHVL (208 aa)). The ADP site is built by glutamine 353, leucine 393, glutamate 394, alanine 395, and alanine 397. Positions 477–480 (SRFD) match the Arginine finger motif. The residue at position 547 (lysine 547) is an N6-acetyllysine. Residue serine 611 is modified to Phosphoserine. An ATP-binding site is contributed by arginine 664. Positions 664–744 (RKKASEDESD…TQDSQKVELS (81 aa)) are disordered. Phosphoserine occurs at positions 668, 672, and 681. Residues 670-681 (DESDLEDEEEKS) show a composition bias toward acidic residues. Tyrosine 705 bears the Phosphotyrosine mark. A Phosphoserine modification is found at serine 708. 3 positions are modified to phosphothreonine: threonine 719, threonine 722, and threonine 729. A compositionally biased stretch (basic and acidic residues) spans 720–744 (PKTDDSQEKTDDSQETQDSQKVELS). 2 positions are modified to phosphoserine: serine 732 and serine 738.

Belongs to the MCM family. Component of the MCM2-7 complex. The complex forms a toroidal hexameric ring with the proposed subunit order MCM2-MCM6-MCM4-MCM7-MCM3-MCM5. Component of the CMG helicase complex, a hexameric ring of related MCM2-7 subunits stabilized by CDC45 and the tetrameric GINS complex. Associated with the replication-specific DNA polymerase alpha. Interacts with MCMBP. Interacts with ANKRD17. Interacts with MCM3AP; this interaction leads to MCM3 acetylation. Acetylated by MCM3AP. In terms of processing, O-glycosylated (O-GlcNAcylated), in a cell cycle-dependent manner.

The protein localises to the nucleus. Its subcellular location is the chromosome. The catalysed reaction is ATP + H2O = ADP + phosphate + H(+). Functionally, acts as a component of the MCM2-7 complex (MCM complex) which is the replicative helicase essential for 'once per cell cycle' DNA replication initiation and elongation in eukaryotic cells. Core component of CDC45-MCM-GINS (CMG) helicase, the molecular machine that unwinds template DNA during replication, and around which the replisome is built. The active ATPase sites in the MCM2-7 ring are formed through the interaction surfaces of two neighboring subunits such that a critical structure of a conserved arginine finger motif is provided in trans relative to the ATP-binding site of the Walker A box of the adjacent subunit. The six ATPase active sites, however, are likely to contribute differentially to the complex helicase activity. Required for the entry in S phase and for cell division. This chain is DNA replication licensing factor MCM3 (Mcm3), found in Mus musculus (Mouse).